The following is a 638-amino-acid chain: DNA gyrase subunit B (638 aa).

Residues 423 to 537 form the Toprim domain; sequence CEVYIVEGDS…KGHVYLAMPP (115 aa). Residues E429, D502, and D504 each contribute to the Mg(2+) site.

The protein belongs to the type II topoisomerase GyrB family. Heterotetramer, composed of two GyrA and two GyrB chains. In the heterotetramer, GyrA contains the active site tyrosine that forms a transient covalent intermediate with DNA, while GyrB binds cofactors and catalyzes ATP hydrolysis. Mg(2+) serves as cofactor. The cofactor is Mn(2+). Ca(2+) is required as a cofactor.

The protein localises to the cytoplasm. The catalysed reaction is ATP-dependent breakage, passage and rejoining of double-stranded DNA.. A type II topoisomerase that negatively supercoils closed circular double-stranded (ds) DNA in an ATP-dependent manner to modulate DNA topology and maintain chromosomes in an underwound state. Negative supercoiling favors strand separation, and DNA replication, transcription, recombination and repair, all of which involve strand separation. Also able to catalyze the interconversion of other topological isomers of dsDNA rings, including catenanes and knotted rings. Type II topoisomerases break and join 2 DNA strands simultaneously in an ATP-dependent manner. The protein is DNA gyrase subunit B of Treponema denticola (strain ATCC 35405 / DSM 14222 / CIP 103919 / JCM 8153 / KCTC 15104).